The following is a 411-amino-acid chain: LL-diaminopimelate aminotransferase (411 aa).

Residues Tyr16 and Gly43 each coordinate substrate. Residues Tyr73, 109-110, Tyr133, Asn188, Tyr219, and 247-249 each bind pyridoxal 5'-phosphate; these read AK and SFS. Lys110, Tyr133, and Asn188 together coordinate substrate. At Lys250 the chain carries N6-(pyridoxal phosphate)lysine. Arg258 and Asn293 together coordinate pyridoxal 5'-phosphate. Residues Asn293 and Arg389 each coordinate substrate.

Belongs to the class-I pyridoxal-phosphate-dependent aminotransferase family. LL-diaminopimelate aminotransferase subfamily. Homodimer. Pyridoxal 5'-phosphate serves as cofactor.

It carries out the reaction (2S,6S)-2,6-diaminopimelate + 2-oxoglutarate = (S)-2,3,4,5-tetrahydrodipicolinate + L-glutamate + H2O + H(+). It participates in amino-acid biosynthesis; L-lysine biosynthesis via DAP pathway; LL-2,6-diaminopimelate from (S)-tetrahydrodipicolinate (aminotransferase route): step 1/1. Functionally, involved in the synthesis of meso-diaminopimelate (m-DAP or DL-DAP), required for both lysine and peptidoglycan biosynthesis. Catalyzes the direct conversion of tetrahydrodipicolinate to LL-diaminopimelate. This is LL-diaminopimelate aminotransferase from Methanobrevibacter smithii (strain ATCC 35061 / DSM 861 / OCM 144 / PS).